The primary structure comprises 888 residues: Leukocyte tyrosine kinase receptor (888 aa).

A signal peptide spans 1–16 (MGCSHRLLLWLGAAGT). At 17-421 (ILCSNSEFQT…CMDLPTTASP (405 aa)) the chain is on the extracellular side. 2 cysteine pairs are disulfide-bonded: Cys73-Cys86 and Cys168-Cys179. Residues 226–294 (LVAAGGGGRS…RSPREGAEGG (69 aa)) form a disordered region. The segment covering 260-273 (GSGGRGGAAGGGSG) has biased composition (gly residues). Residues Cys297 and Cys319 are joined by a disulfide bond. Asn377 and Asn409 each carry an N-linked (GlcNAc...) asparagine glycan. Residues 422–446 (LILMGAVVAALALSLLMMCAVLILV) form a helical membrane-spanning segment. Residues 447-888 (NQKCQGLWGT…SSSSSIPGIQ (442 aa)) lie on the Cytoplasmic side of the membrane. Residues 506 to 782 (VTLLRALGHG…IQYCTQDPDV (277 aa)) enclose the Protein kinase domain. ATP-binding positions include 512–520 (LGHGAFGEV) and Lys540. Asp639 acts as the Proton acceptor in catalysis. Tyr672 carries the phosphotyrosine; by autocatalysis modification. The tract at residues 857 to 888 (TYGSWTPRGPQGEDTGIEHCNGSSSSSIPGIQ) is disordered. Residues 877–888 (NGSSSSSIPGIQ) show a composition bias toward polar residues.

Belongs to the protein kinase superfamily. Tyr protein kinase family. Insulin receptor subfamily. In terms of assembly, homodimer; homodimerizes following ligand-binding. Part of a complex including LTK, TNK2 and GRB2, in which GRB2 promotes LTK recruitment by TNK2. In terms of processing, phosphorylated at tyrosine residues by autocatalysis, which activates kinase activity. As to expression, subsets of lymphoid and neuronal cells.

It is found in the cell membrane. The protein localises to the endoplasmic reticulum. It carries out the reaction L-tyrosyl-[protein] + ATP = O-phospho-L-tyrosyl-[protein] + ADP + H(+). Activated by ligand-binding, leading to homodimerization and autophosphorylation. Receptor with a tyrosine-protein kinase activity. Following activation by ALKAL1 or ALKAL2 ligands at the cell surface, transduces an extracellular signal into an intracellular response. Ligand-binding to the extracellular domain induces tyrosine kinase activation, leading to activation of the mitogen-activated protein kinase (MAPK) pathway. Phosphorylates almost exclusively at the first tyrosine of the Y-x-x-x-Y-Y motif. The exact function of this protein is not known; studies with chimeric proteins demonstrate its ability to promote growth and specifically neurite outgrowth, and cell survival. Involved in regulation of the secretory pathway involving endoplasmic reticulum (ER) export sites (ERESs) and ER to Golgi transport. The protein is Leukocyte tyrosine kinase receptor of Mus musculus (Mouse).